The following is a 223-amino-acid chain: uncharacterized protein (223 aa).

The disordered stretch occupies residues 1-30 (MASATVRNVPLLDDDTIPFGEEDEMRDPSR). The span at 12–25 (LDDDTIPFGEEDEM) shows a compositional bias: acidic residues. A run of 4 helical transmembrane segments spans residues 35-55 (YTHPYVTFFHLFFRGAAILIY), 56-76 (MFCGWFSDSFITSFVFVVLFL), 129-149 (IFWLGLILCPVFWGLFFLFAL), and 154-174 (FKWLLLVMIAIALNAANLYGY).

Belongs to the TVP23 family.

It localises to the membrane. This is an uncharacterized protein from Drosophila melanogaster (Fruit fly).